The chain runs to 264 residues: Thymidylate synthase (264 aa).

R21 serves as a coordination point for dUMP. H51 serves as a coordination point for (6R)-5,10-methylene-5,6,7,8-tetrahydrofolate. 126 to 127 (RR) contacts dUMP. The active-site Nucleophile is the C146. DUMP is bound by residues 166 to 169 (RSCD), N177, and 207 to 209 (HLY). (6R)-5,10-methylene-5,6,7,8-tetrahydrofolate is bound at residue D169. A (6R)-5,10-methylene-5,6,7,8-tetrahydrofolate-binding site is contributed by A263.

It belongs to the thymidylate synthase family. Bacterial-type ThyA subfamily. In terms of assembly, homodimer.

The protein resides in the cytoplasm. It catalyses the reaction dUMP + (6R)-5,10-methylene-5,6,7,8-tetrahydrofolate = 7,8-dihydrofolate + dTMP. The protein operates within pyrimidine metabolism; dTTP biosynthesis. In terms of biological role, catalyzes the reductive methylation of 2'-deoxyuridine-5'-monophosphate (dUMP) to 2'-deoxythymidine-5'-monophosphate (dTMP) while utilizing 5,10-methylenetetrahydrofolate (mTHF) as the methyl donor and reductant in the reaction, yielding dihydrofolate (DHF) as a by-product. This enzymatic reaction provides an intracellular de novo source of dTMP, an essential precursor for DNA biosynthesis. The protein is Thymidylate synthase of Shewanella baltica (strain OS185).